Consider the following 230-residue polypeptide: MTARDRLIVGLDVPNLQEAEKVVSALGDDILYYKIGYQLAFAGGLEFARDLAKDGKKIFLDMKLLDIDNTVASGVENIVKMGMSMLTLHAYPKAMKAAVAAAKGSDLCLLGVTVLTSMDEEDLIAAGYEYDPHTLVLRRAEQALLAGMGGIVCSAEEASAVRKIIGPDMALVTPGIRPAGSDKGDQKRVMTPAEGIRAGSSHLVVARPIVKAADPREAARAILAEMDAAL.

Residues Asp-12, Lys-34, Asp-61–Thr-70, Thr-116, Arg-177, Gln-186, and Arg-207 contribute to the substrate site. Lys-63 acts as the Proton donor in catalysis.

This sequence belongs to the OMP decarboxylase family. Type 1 subfamily. In terms of assembly, homodimer.

The catalysed reaction is orotidine 5'-phosphate + H(+) = UMP + CO2. The protein operates within pyrimidine metabolism; UMP biosynthesis via de novo pathway; UMP from orotate: step 2/2. Its function is as follows. Catalyzes the decarboxylation of orotidine 5'-monophosphate (OMP) to uridine 5'-monophosphate (UMP). The sequence is that of Orotidine 5'-phosphate decarboxylase from Rhizobium rhizogenes (strain K84 / ATCC BAA-868) (Agrobacterium radiobacter).